Consider the following 163-residue polypeptide: UPF0303 protein SAV_5210 (163 aa).

This sequence belongs to the UPF0303 family.

This Streptomyces avermitilis (strain ATCC 31267 / DSM 46492 / JCM 5070 / NBRC 14893 / NCIMB 12804 / NRRL 8165 / MA-4680) protein is UPF0303 protein SAV_5210.